Reading from the N-terminus, the 166-residue chain is Phosphopantetheine adenylyltransferase (166 aa).

Threonine 14 serves as a coordination point for substrate. ATP-binding positions include 14-15 (TF) and histidine 22. Substrate is bound by residues lysine 46, leucine 78, and arginine 92. Residues 93–95 (GLR), glutamate 103, and 128–134 (WMYLSSS) contribute to the ATP site.

The protein belongs to the bacterial CoaD family. Homohexamer. Mg(2+) is required as a cofactor.

It localises to the cytoplasm. The catalysed reaction is (R)-4'-phosphopantetheine + ATP + H(+) = 3'-dephospho-CoA + diphosphate. The protein operates within cofactor biosynthesis; coenzyme A biosynthesis; CoA from (R)-pantothenate: step 4/5. Functionally, reversibly transfers an adenylyl group from ATP to 4'-phosphopantetheine, yielding dephospho-CoA (dPCoA) and pyrophosphate. This is Phosphopantetheine adenylyltransferase from Maridesulfovibrio salexigens (strain ATCC 14822 / DSM 2638 / NCIMB 8403 / VKM B-1763) (Desulfovibrio salexigens).